A 205-amino-acid polypeptide reads, in one-letter code: Ras-related protein Rab-4 (205 aa).

14–22 (GSQSVGKSC) contacts GTP. An Effector region motif is present at residues 36–44 (STHTIGVDF). Residues 62–66 (DTAGQ), 120–123 (NKAD), and 150–152 (SAL) contribute to the GTP site. Residues cysteine 203 and cysteine 205 are each lipidated (S-geranylgeranyl cysteine). Cysteine 205 carries the post-translational modification Cysteine methyl ester.

This sequence belongs to the small GTPase superfamily. Rab family.

The protein resides in the cell membrane. In terms of biological role, protein transport. Probably involved in vesicular traffic. The polypeptide is Ras-related protein Rab-4 (rab4) (Dictyostelium discoideum (Social amoeba)).